Reading from the N-terminus, the 458-residue chain is Bifunctional protein GlmU (458 aa).

Positions 1 to 229 are pyrophosphorylase; that stretch reads MNKFAIVLAA…FDESLGVNDR (229 aa). UDP-N-acetyl-alpha-D-glucosamine is bound by residues 8–11, lysine 22, glutamine 72, and 77–78; these read LAAG and GT. Position 102 (aspartate 102) interacts with Mg(2+). Residues glycine 139, glutamate 154, asparagine 169, and asparagine 227 each coordinate UDP-N-acetyl-alpha-D-glucosamine. A Mg(2+)-binding site is contributed by asparagine 227. A linker region spans residues 230-250; sequence VALSQAELTMRKRINHQHMVN. The N-acetyltransferase stretch occupies residues 251–458; the sequence is GVTLIDPATT…AKKMPHYRGQ (208 aa). The UDP-N-acetyl-alpha-D-glucosamine site is built by arginine 332 and lysine 350. Histidine 362 functions as the Proton acceptor in the catalytic mechanism. The UDP-N-acetyl-alpha-D-glucosamine site is built by tyrosine 365 and asparagine 376. 4 residues coordinate acetyl-CoA: alanine 379, serine 404, alanine 422, and arginine 439.

It in the N-terminal section; belongs to the N-acetylglucosamine-1-phosphate uridyltransferase family. The protein in the C-terminal section; belongs to the transferase hexapeptide repeat family. Homotrimer. It depends on Mg(2+) as a cofactor.

The protein resides in the cytoplasm. It catalyses the reaction alpha-D-glucosamine 1-phosphate + acetyl-CoA = N-acetyl-alpha-D-glucosamine 1-phosphate + CoA + H(+). The catalysed reaction is N-acetyl-alpha-D-glucosamine 1-phosphate + UTP + H(+) = UDP-N-acetyl-alpha-D-glucosamine + diphosphate. Its pathway is nucleotide-sugar biosynthesis; UDP-N-acetyl-alpha-D-glucosamine biosynthesis; N-acetyl-alpha-D-glucosamine 1-phosphate from alpha-D-glucosamine 6-phosphate (route II): step 2/2. It participates in nucleotide-sugar biosynthesis; UDP-N-acetyl-alpha-D-glucosamine biosynthesis; UDP-N-acetyl-alpha-D-glucosamine from N-acetyl-alpha-D-glucosamine 1-phosphate: step 1/1. It functions in the pathway bacterial outer membrane biogenesis; LPS lipid A biosynthesis. Functionally, catalyzes the last two sequential reactions in the de novo biosynthetic pathway for UDP-N-acetylglucosamine (UDP-GlcNAc). The C-terminal domain catalyzes the transfer of acetyl group from acetyl coenzyme A to glucosamine-1-phosphate (GlcN-1-P) to produce N-acetylglucosamine-1-phosphate (GlcNAc-1-P), which is converted into UDP-GlcNAc by the transfer of uridine 5-monophosphate (from uridine 5-triphosphate), a reaction catalyzed by the N-terminal domain. This chain is Bifunctional protein GlmU, found in Lactococcus lactis subsp. lactis (strain IL1403) (Streptococcus lactis).